A 508-amino-acid chain; its full sequence is MRCPKSAVTMRNEELLLSNGTANKMNGALDHSDQPDPDAIKMFVGQIPRSWSEKELKELFEPYGAVYQINVLRDRSQNPPQSKGCCFVTFYTRKAALEAQNALHNIKTLPGMHHPIQMKPADSEKSNAVEDRKLFIGMVSKKCNENDIRVMFSPFGQIEECRILRGPDGLSRGCAFVTFSTRAMAQNAIKAMHQSQTMEGCSSPIVVKFADTQKDKEQRRLQQQLAQQMQQLNTATWGNLTGLGGLTPQYLALLQQATSSSNLGAFSGIQQMAGMNALQLQNLATLAAAAAAAQTSATSTNANPLSSTSSALGALTSPVAASTPNSTAGAAMNSLTSLGTLQGLAGATVGLNNINALAGMAALNGGLGATGLTNGTAGTMDALTQAYSGIQQYAAAALPTLYSQSLLQQQSAAGSQKEGPEGANLFIYHLPQEFGDQDILQMFMPFGNVISAKVFIDKQTNLSKCFGFVSYDNPVSAQAAIQAMNGFQIGMKRLKVQLKRSKNDSKPY.

Necessary for RNA-binding, TNNT2 exon 5 and NMDA R1 exon 21 inclusion stretches follow at residues methionine 1–leucine 283 and leucine 357–tyrosine 508. 3 RRM domains span residues isoleucine 40–serine 123, arginine 132–threonine 212, and alanine 423–serine 501.

This sequence belongs to the CELF/BRUNOL family. Interacts with A1CF. In terms of tissue distribution, expressed in tongue, spleen and brain (at protein level). Expressed in liver, thigh, stomach, lung and heart to very low levels (at protein level). Expressed in heart, brain, lung and muscle.

Its subcellular location is the nucleus. It is found in the cytoplasm. In terms of biological role, RNA-binding protein implicated in the regulation of several post-transcriptional events. Involved in pre-mRNA alternative splicing, mRNA translation and stability. Mediates exon inclusion and/or exclusion in pre-mRNA that are subject to tissue-specific and developmentally regulated alternative splicing. Specifically activates exon 5 inclusion of TNNT2 in embryonic, but not adult, skeletal muscle. Activates TNNT2 exon 5 inclusion by antagonizing the repressive effect of PTB. Acts both as an activator and as a repressor of a pair of coregulated exons: promotes inclusion of the smooth muscle (SM) exon but exclusion of the non-muscle (NM) exon in actinin pre-mRNAs. Promotes inclusion of exonS 21 and exclusion of exon 5 of the NMDA receptor R1 pre-mRNA. Involved in the apoB RNA editing activity. Increases COX2 mRNA stability and inhibits COX2 mRNA translation in epithelial cells after radiation injury. Modulates the cellular apoptosis program by regulating COX2-mediated prostaglandin E2 (PGE2) expression. Binds to (CUG)n triplet repeats in the 3'-UTR of transcripts such as DMPK. Binds to the muscle-specific splicing enhancer (MSE) intronic sites flanking the TNNT2 alternative exon 5. Binds preferentially to UG-rich sequences, in particular UG repeat and UGUU motifs. Binds to apoB mRNA, specifically to AU-rich sequences located immediately upstream of the edited cytidine. Binds AU-rich sequences in the 3'-UTR of COX2 mRNA. Binds to an intronic RNA element responsible for the silencing of exon 21 splicing. Binds to (CUG)n repeats. May be a specific regulator of miRNA biogenesis. Binds to primary microRNA pri-MIR140 and, with CELF1, negatively regulates the processing to mature miRNA. The protein is CUGBP Elav-like family member 2 (Celf2) of Mus musculus (Mouse).